The primary structure comprises 213 residues: Cytochrome c biogenesis ATP-binding export protein CcmA (213 aa).

Residues 8 to 213 enclose the ABC transporter domain; it reads LQATALTCER…RDIDLGQWAA (206 aa). An ATP-binding site is contributed by 40-47; that stretch reads GPNGSGKT.

The protein belongs to the ABC transporter superfamily. CcmA exporter (TC 3.A.1.107) family. In terms of assembly, the complex is composed of two ATP-binding proteins (CcmA) and two transmembrane proteins (CcmB).

The protein resides in the cell inner membrane. The catalysed reaction is heme b(in) + ATP + H2O = heme b(out) + ADP + phosphate + H(+). In terms of biological role, part of the ABC transporter complex CcmAB involved in the biogenesis of c-type cytochromes; once thought to export heme, this seems not to be the case, but its exact role is uncertain. Responsible for energy coupling to the transport system. In Pseudomonas savastanoi pv. phaseolicola (strain 1448A / Race 6) (Pseudomonas syringae pv. phaseolicola (strain 1448A / Race 6)), this protein is Cytochrome c biogenesis ATP-binding export protein CcmA.